The sequence spans 417 residues: uncharacterized protein (417 aa).

The next 10 helical transmembrane spans lie at 21–41, 50–70, 88–108, 166–186, 217–237, 255–275, 283–303, 308–328, 351–371, and 373–393; these read ISSL…AFQL, LLMM…GLLA, LTVI…LLSV, SVFY…FFLP, MPLL…LQIG, LAGW…AITG, LLYF…APFL, IAGI…FGLV, AIQS…GVLA, and WIGV…IGLI.

It belongs to the major facilitator superfamily. TCR/Tet family.

It localises to the cell membrane. This is an uncharacterized protein from Bacillus subtilis (strain 168).